The primary structure comprises 774 residues: Fe(3+) dicitrate transport protein FecA (774 aa).

The N-terminal stretch at 1–33 (MTPLRVFRKTTPLVNTIRLSLLPLAGLSFSAFA) is a signal peptide. The short motif at 56–63 (FTLSVDAS) is the TonB box element. The TBDR plug domain occupies 129–250 (DVFEHAGARD…VGGVVNFVTR (122 aa)). The region spanning 255–774 (DFGIEAGVEG…TLYMQGSLKF (520 aa)) is the TBDR beta-barrel domain. A TonB C-terminal box motif is present at residues 757-774 (GIYAGQPRTLYMQGSLKF).

Belongs to the TonB-dependent receptor family. Interacts (via periplasmic N-terminus) with FecR (via periplasmic C-terminus).

The protein localises to the cell outer membrane. In terms of biological role, fecA is the outer membrane receptor protein in the Fe(3+) dicitrate transport system. The chain is Fe(3+) dicitrate transport protein FecA (fecA) from Escherichia coli (strain K12).